The chain runs to 256 residues: Small ribosomal subunit protein eS1B (256 aa).

Position 2 is an N-acetylalanine; partial (A2).

This sequence belongs to the eukaryotic ribosomal protein eS1 family. Component of the small ribosomal subunit. Mature ribosomes consist of a small (40S) and a large (60S) subunit. The 40S subunit contains about 33 different proteins and 1 molecule of RNA (18S). The 60S subunit contains about 49 different proteins and 3 molecules of RNA (25S, 5.8S and 5S).

Its subcellular location is the cytoplasm. The protein is Small ribosomal subunit protein eS1B of Scheffersomyces stipitis (strain ATCC 58785 / CBS 6054 / NBRC 10063 / NRRL Y-11545) (Yeast).